Reading from the N-terminus, the 418-residue chain is DnaJ protein homolog 2 (418 aa).

The region spanning 11–76 (NTKYYEVLGV…REIYDQYGEE (66 aa)) is the J domain. The CR-type zinc finger occupies 135–219 (GTSKKLSLSR…CKGEKVVQQK (85 aa)). 4 CXXCXGXG motif repeats span residues 148–155 (CTKCKGKG), 164–171 (CASCQGSG), 191–198 (CNECKGTG), and 207–214 (CPQCKGEK). Residues 382-418 (VNIEEEMRRKQHQQAQEAYDEDDEGHGGAQRVQCAQQ) form a disordered region. Cysteine 415 carries the cysteine methyl ester modification. Cysteine 415 carries the S-farnesyl cysteine lipid modification. The propeptide at 416 to 418 (AQQ) is removed in mature form.

It is found in the membrane. Its function is as follows. Plays a continuous role in plant development probably in the structural organization of compartments. The polypeptide is DnaJ protein homolog 2 (LDJ2) (Allium porrum (Leek)).